Reading from the N-terminus, the 1098-residue chain is Probable arabinosyltransferase B (1098 aa).

12 helical membrane passes run 28–50 (WVATIAGLIGFVLSVATPLLPVV), 217–239 (LKLLAIIGAIVATVVALIALWRL), 271–293 (ASWRTFTLTDAVVIFGFLLWHVI), 402–419 (LRPEGIIALGSLVTYVLI), 434–456 (AVVTAAFTLGVQPTGLIAVAALV), 472–494 (LVGTLPLVSPMLAAGTVILTVVF), 541–558 (FGFLITALCLFTAVFIML), 570–587 (PAWRLMGVIFGTMFFLMF), 597–619 (GLFAAVGAAMAALTTVLVSPSVL), 626–648 (MAFLAALFFLLALCWATTNGWWY), 663–685 (IDGITVSTIFFALFAIAAGYAAW), and 698–720 (LIRALTTAPVPIVAGFMAAVFVA).

Belongs to the emb family.

It localises to the cell membrane. Arabinosyl transferase responsible for the polymerization of arabinose into the arabinan of arabinogalactan. The polypeptide is Probable arabinosyltransferase B (embB) (Mycobacterium bovis (strain ATCC BAA-935 / AF2122/97)).